Reading from the N-terminus, the 151-residue chain is FUN14 domain-containing protein 2 (151 aa).

Topologically, residues 1–42 (MAANSQGNFDGKFEALDLAELTKKQPWWRKLFGQESGPSAEK) are cytoplasmic. Residues 43–63 (YSVATQLVIGGVTGWCTGFVF) form a helical membrane-spanning segment. Residues 64–69 (QKVGKL) lie on the Mitochondrial intermembrane side of the membrane. Residues 70–90 (AATAVGGGFFLLQLANHTGYI) form a helical membrane-spanning segment. Residues 91–126 (KVDWQRVEKDMKKAKEQLKIRKNKQIPTEVKSKAEE) lie on the Cytoplasmic side of the membrane. A helical transmembrane segment spans residues 127–147 (VVSFVKKNVLVTGGFFGGFLL). The Mitochondrial intermembrane portion of the chain corresponds to 148-151 (GMAS).

The protein belongs to the FUN14 family. As to expression, highly expressed in platelet (at protein level). Expressed in liver, brain, heart and muscle.

It localises to the mitochondrion outer membrane. The protein localises to the nucleus. Binds directly and specifically 1,2-Diacyl-sn-glycero-3-phospho-(1'-myo-inositol-3',4',5'-bisphosphate) (PIP3) leading to the recruitment of PIP3 to mitochondria and may play a role in the regulation of the platelet activation via AKT/GSK3B/cGMP signaling pathways. May act as transcription factor that regulates SREBP1 (isoform SREBP-1C) expression in order to modulate triglyceride (TG) homeostasis in hepatocytes. The polypeptide is FUN14 domain-containing protein 2 (Mus musculus (Mouse)).